The following is a 122-amino-acid chain: Proximal tubules-expressed gene protein (122 aa).

The helical transmembrane segment at Trp-33–Ala-53 threads the bilayer.

The protein belongs to the PDZK1-interacting protein 1/SMIM24 family. Expressed in prospective pronephric mesoderm at the late gastrula stage. After neurulation, expressed in the intermediate mesoderm, eye placode and blood islands. Expression becomes restricted to the pronephric proximal tubule during embryogenesis, but is absent from the connecting tubules.

Its subcellular location is the membrane. Functionally, essential for pronephric tubule development, acting upstream of pax8 and lhx1/lim1 and downstream of retinoic acid signaling to induce pronephric mesoderm to form pronephric tubule-specific cells. The polypeptide is Proximal tubules-expressed gene protein (pteg) (Xenopus laevis (African clawed frog)).